Consider the following 214-residue polypeptide: Charged multivesicular body protein 2b-A (214 aa).

A coiled-coil region spans residues 25–55 (QRAITRDRTALEKQEKQLEMEIKKMAKAGNK). Residues 178-214 (MAKAPSAAKGLPSASASKSTGISDEEIERQLKALGVD) are disordered. An MIT-interacting motif motif is present at residues 202–212 (EEIERQLKALG).

This sequence belongs to the SNF7 family. In terms of assembly, probable core component of the endosomal sorting required for transport complex III (ESCRT-III). ESCRT-III components are thought to multimerize to form a flat lattice on the perimeter membrane of the endosome.

The protein localises to the cytoplasm. It is found in the cytosol. Its subcellular location is the late endosome membrane. In terms of biological role, probable core component of the endosomal sorting required for transport complex III (ESCRT-III) which is involved in multivesicular bodies (MVBs) formation and sorting of endosomal cargo proteins into MVBs. MVBs contain intraluminal vesicles (ILVs) that are generated by invagination and scission from the limiting membrane of the endosome and mostly are delivered to lysosomes enabling degradation of membrane proteins, such as stimulated growth factor receptors, lysosomal enzymes and lipids. This chain is Charged multivesicular body protein 2b-A (chmp2b-a), found in Xenopus laevis (African clawed frog).